Here is a 114-residue protein sequence, read N- to C-terminus: T cell receptor beta variable 5-5 (114 aa).

An N-terminal signal peptide occupies residues 1–21 (MGPGLLCWVLLCLLGAGPVDA). The Ig-like domain maps to 22-114 (GVTQSPTHLI…SALYLCASSL (93 aa)). Cysteine 42 and cysteine 110 are oxidised to a cystine. A glycan (N-linked (GlcNAc...) asparagine) is linked at asparagine 90.

As to quaternary structure, alpha-beta TR is a heterodimer composed of an alpha and beta chain; disulfide-linked. The alpha-beta TR is associated with the transmembrane signaling CD3 coreceptor proteins to form the TR-CD3 (TcR or TCR). The assembly of alpha-beta TR heterodimers with CD3 occurs in the endoplasmic reticulum where a single alpha-beta TR heterodimer associates with one CD3D-CD3E heterodimer, one CD3G-CD3E heterodimer and one CD247 homodimer forming a stable octameric structure. CD3D-CD3E and CD3G-CD3E heterodimers preferentially associate with TR alpha and TR beta chains, respectively. The association of the CD247 homodimer is the last step of TcR assembly in the endoplasmic reticulum and is required for transport to the cell surface.

It is found in the cell membrane. Functionally, v region of the variable domain of T cell receptor (TR) beta chain that participates in the antigen recognition. Alpha-beta T cell receptors are antigen specific receptors which are essential to the immune response and are present on the cell surface of T lymphocytes. Recognize peptide-major histocompatibility (MH) (pMH) complexes that are displayed by antigen presenting cells (APC), a prerequisite for efficient T cell adaptive immunity against pathogens. Binding of alpha-beta TR to pMH complex initiates TR-CD3 clustering on the cell surface and intracellular activation of LCK that phosphorylates the ITAM motifs of CD3G, CD3D, CD3E and CD247 enabling the recruitment of ZAP70. In turn ZAP70 phosphorylates LAT, which recruits numerous signaling molecules to form the LAT signalosome. The LAT signalosome propagates signal branching to three major signaling pathways, the calcium, the mitogen-activated protein kinase (MAPK) kinase and the nuclear factor NF-kappa-B (NF-kB) pathways, leading to the mobilization of transcription factors that are critical for gene expression and essential for T cell growth and differentiation. The T cell repertoire is generated in the thymus, by V-(D)-J rearrangement. This repertoire is then shaped by intrathymic selection events to generate a peripheral T cell pool of self-MH restricted, non-autoaggressive T cells. Post-thymic interaction of alpha-beta TR with the pMH complexes shapes TR structural and functional avidity. In Homo sapiens (Human), this protein is T cell receptor beta variable 5-5.